We begin with the raw amino-acid sequence, 462 residues long: MGKLQEVLKHPDELVPLMQMLVSDYYTKIVPRDPGLGFCYRMLNKVSRSFAIVIQQLPELLRDPICVFYLVLRALDTVEDDMALPNDIKLPLLRAFHKKIYDRKWSMKCGYGPYVQLMEEYPMVTGVFLKLDPGPREVITEICRKMGAGMAEFIPKEVLTVKDYDQYCHYAAGLVGEGLSKLAVGSGLENPVLLQKEDLSNHMGLFLQKTNIVRDYLEDINEEPAPRMFWPKEIWGKYTKDLADFKDPANEKGAVQCLNHMVTDALRHGEHALKYMALLRDPQYFNFCAIPQVMAFGTLSLCYNNPQVFKGVVKLRKGESAKLMTTVKSMPALYRTFLRMADDMVARCKGEARQDPNVATTLKRLQAIQAVCKTGLRSSIKSRKKQAATPLSDDFISKLVLVLGLGYCVYAFNLLPLLWKSALIPGPPPPALTSSLGLPHQIIAVFCVLTAGYQVFLRGGLA.

Arginine 48 and arginine 73 together coordinate NADP(+). Residues aspartate 76, glutamate 79, and aspartate 80 each coordinate Mg(2+). NADP(+) is bound by residues arginine 214, lysine 314, and arginine 316. Helical transmembrane passes span 399–419 and 436–456; these read LVLV…PLLW and LGLP…YQVF.

It belongs to the phytoene/squalene synthase family. Mg(2+) serves as cofactor.

Its subcellular location is the membrane. It carries out the reaction 2 (2E,6E)-farnesyl diphosphate + NADH + H(+) = squalene + 2 diphosphate + NAD(+). The enzyme catalyses 2 (2E,6E)-farnesyl diphosphate + NADPH + H(+) = squalene + 2 diphosphate + NADP(+). Functionally, converts farnesyl diphosphate (FPP) into squalene, a precursor for sterol biosynthesis in eukaryotes. The polypeptide is Squalene synthase LSS (Botryococcus braunii (Green alga)).